Reading from the N-terminus, the 367-residue chain is Germination protease (367 aa).

The propeptide occupies M1–D15.

It belongs to the peptidase A25 family. As to quaternary structure, homotetramer. In terms of processing, autoproteolytically processed. The inactive tetrameric zymogen termed p46 autoprocesses to a smaller form termed p41, which is active only during spore germination.

It carries out the reaction Endopeptidase action with P4 Glu or Asp, P1 preferably Glu &gt; Asp, P1' hydrophobic and P2' Ala.. In terms of biological role, initiates the rapid degradation of small, acid-soluble proteins during spore germination. The protein is Germination protease of Bacillus cytotoxicus (strain DSM 22905 / CIP 110041 / 391-98 / NVH 391-98).